Consider the following 280-residue polypeptide: Octanoyl-[GcvH]:protein N-octanoyltransferase (280 aa).

The BPL/LPL catalytic domain maps to Q40–N245. C144 functions as the Acyl-thioester intermediate in the catalytic mechanism.

It belongs to the octanoyltransferase LipL family.

It carries out the reaction N(6)-octanoyl-L-lysyl-[glycine-cleavage complex H protein] + L-lysyl-[lipoyl-carrier protein] = N(6)-octanoyl-L-lysyl-[lipoyl-carrier protein] + L-lysyl-[glycine-cleavage complex H protein]. Its pathway is protein modification; protein lipoylation via endogenous pathway; protein N(6)-(lipoyl)lysine from octanoyl-[acyl-carrier-protein]. In terms of biological role, catalyzes the amidotransfer (transamidation) of the octanoyl moiety from octanoyl-GcvH to the lipoyl domain of the E2 subunit of lipoate-dependent enzymes. The sequence is that of Octanoyl-[GcvH]:protein N-octanoyltransferase from Exiguobacterium sp. (strain ATCC BAA-1283 / AT1b).